Consider the following 759-residue polypeptide: Cullin-4A (759 aa).

Lys8 is covalently cross-linked (Glycyl lysine isopeptide (Lys-Gly) (interchain with G-Cter in SUMO2)). Ser10 is modified (phosphoserine). Lys33 participates in a covalent cross-link: Glycyl lysine isopeptide (Lys-Gly) (interchain with G-Cter in ubiquitin). The region spanning 691–751 (DRQYQIDAAI…RDYMERDKDN (61 aa)) is the Cullin neddylation domain. Residue Lys705 forms a Glycyl lysine isopeptide (Lys-Gly) (interchain with G-Cter in NEDD8) linkage.

Belongs to the cullin family. As to quaternary structure, can self-associate. Component of multiple DCX (DDB1-CUL4-X-box) E3 ubiquitin-protein ligase complexes that seem to consist of DDB1, CUL4A or CUL4B, RBX1 and a variable substrate recognition component which seems to belong to a protein family described as DCAF (Ddb1- and Cul4-associated factor) or CDW (CUL4-DDB1-associated WD40-repeat) proteins. Component of the CSA complex (DCX(ERCC8) complex) containing ERCC8, RBX1, DDB1 and CUL4A; the CSA complex interacts with RNA polymerase II; upon UV irradiation it interacts with the COP9 signalosome and preferentially with the hyperphosphorylated form of RNA polymerase II. Component of the DCX(DET1-COP1) complex with the substrate recognition component DET1 and COP1. Component of the DCX(DDB2) complex with the substrate recognition component DDB2. Component of the DCX(DTL) complex with the putative substrate recognition component DTL. Component of DCX complexes part of the DesCEND (destruction via C-end degrons) pathway, which contain either TRPC4AP or DCAF12 as substrate-recognition component. Component of the DCX(AMBRA1) complex with the substrate recognition component AMBRA1. Interacts with DDB1, RBX1, RNF7, CDT1, TIP120A/CAND1, SKP2, CDKN1B, MDM2, TP53 and HOXA9. Interacts with DDB2; the interactions with DDB2 and CAND1 are mutually exclusive. Interacts with DCAF1, DTL, DDA1, DCAF6, DCAF4, DCAF16, DCAF17, DET1, WDTC1, DCAF5, DCAF11, WDR24A, COP1, PAFAH1B1, ERCC8, GRWD1, FBXW5, RBBP7, GNB2, WSB1, WSB2, NUP43, PWP1, FBXW8, ATG16L1, KATNB1, RBBP4, RBBP5, LRWD1 and DCAF8. May interact with WDR26, WDR51B, SNRNP40, WDR61, WDR76, WDR5. Interacts (when neddylated) with ARIH1; leading to activate the E3 ligase activity of ARIH1. The DDB1-CUL4A complex interacts with CRY1. Interacts (unneddylated form) with DCUN1D1, DCUN1D2, DCUN1D3, DCUN1D4 and DCUN1D5; these interactions promote the cullin neddylation. (Microbial infection) Interacts with Epstein-Barr virus BPLF1. Post-translationally, neddylated; required for activity of cullin-RING-based E3 ubiquitin-protein ligase complexes. Deneddylated via its interaction with the COP9 signalosome (CSN) complex. (Microbial infection) Deneddylated by Epstein-Barr virus BPLF1 leading to a S-phase-like environment that is required for efficient replication of the viral genome.

The protein operates within protein modification; protein ubiquitination. Core component of multiple cullin-RING-based E3 ubiquitin-protein ligase complexes which mediate the ubiquitination of target proteins. As a scaffold protein may contribute to catalysis through positioning of the substrate and the ubiquitin-conjugating enzyme. The E3 ubiquitin-protein ligase activity of the complex is dependent on the neddylation of the cullin subunit and is inhibited by the association of the deneddylated cullin subunit with TIP120A/CAND1. The functional specificity of the E3 ubiquitin-protein ligase complex depends on the variable substrate recognition component. DCX(DET1-COP1) directs ubiquitination of JUN. DCX(DDB2) directs ubiquitination of XPC. DCX(DDB2) ubiquitinates histones H3-H4 and is required for efficient histone deposition during replication-coupled (H3.1) and replication-independent (H3.3) nucleosome assembly, probably by facilitating the transfer of H3 from ASF1A/ASF1B to other chaperones involved in histone deposition. DCX(DTL) plays a role in PCNA-dependent polyubiquitination of CDT1 and MDM2-dependent ubiquitination of p53/TP53 in response to radiation-induced DNA damage and during DNA replication. DCX(DTL) directs autoubiquitination of DTL. In association with DDB1 and SKP2 probably is involved in ubiquitination of CDKN1B/p27kip. Is involved in ubiquitination of HOXA9. The DDB1-CUL4A-DTL E3 ligase complex regulates the circadian clock function by mediating the ubiquitination and degradation of CRY1. The DCX(ERCC8) complex (also named CSA complex) plays a role in transcription-coupled repair (TCR). A number of DCX complexes (containing either TRPC4AP or DCAF12 as substrate-recognition component) are part of the DesCEND (destruction via C-end degrons) pathway, which recognizes a C-degron located at the extreme C terminus of target proteins, leading to their ubiquitination and degradation. The DCX(AMBRA1) complex is a master regulator of the transition from G1 to S cell phase by mediating ubiquitination of phosphorylated cyclin-D (CCND1, CCND2 and CCND3). The DCX(AMBRA1) complex also acts as a regulator of Cul5-RING (CRL5) E3 ubiquitin-protein ligase complexes by mediating ubiquitination and degradation of Elongin-C (ELOC) component of CRL5 complexes. With CUL4B, contributes to ribosome biogenesis. This chain is Cullin-4A, found in Homo sapiens (Human).